The sequence spans 259 residues: 5'-nucleotidase SurE (259 aa).

A divalent metal cation-binding residues include Asp8, Asp9, Ser40, and Asn92.

The protein belongs to the SurE nucleotidase family. A divalent metal cation serves as cofactor.

The protein resides in the cytoplasm. It carries out the reaction a ribonucleoside 5'-phosphate + H2O = a ribonucleoside + phosphate. Nucleotidase that shows phosphatase activity on nucleoside 5'-monophosphates. The polypeptide is 5'-nucleotidase SurE (Stenotrophomonas maltophilia (strain K279a)).